The chain runs to 1795 residues: Putative surface cell antigen sca2 (1795 aa).

Positions M1–A33 are cleaved as a signal peptide. A compositionally biased stretch (polar residues) spans F360–R373. 3 disordered regions span residues F360–S391, L664–S709, and K1354–L1441. Residues P672 to L700 are compositionally biased toward pro residues. 2 stretches are compositionally biased toward basic and acidic residues: residues S1364–D1383 and S1398–S1409. Over residues D1417–E1432 the composition is skewed to acidic residues. The Autotransporter domain occupies E1516–L1795.

It localises to the cell outer membrane. The protein is Putative surface cell antigen sca2 (sca2) of Rickettsia conorii (strain ATCC VR-613 / Malish 7).